An 868-amino-acid chain; its full sequence is LPS-assembly protein LptD (868 aa).

Residues 1–24 form the signal peptide; sequence MLKGIHKYLLMCFGTVLFTVQANA.

Belongs to the LptD family. In terms of assembly, component of the lipopolysaccharide transport and assembly complex. Interacts with LptE and LptA.

Its subcellular location is the cell outer membrane. Together with LptE, is involved in the assembly of lipopolysaccharide (LPS) at the surface of the outer membrane. The chain is LPS-assembly protein LptD from Francisella tularensis subsp. tularensis (strain FSC 198).